Here is a 79-residue protein sequence, read N- to C-terminus: Moronecidin (79 aa).

The N-terminal stretch at methionine 1 to alanine 22 is a signal peptide. Residue glycine 44 is modified to Glycine amide. The segment at glycine 45–aspartate 79 is disordered. Residues alanine 47–aspartate 79 constitute a propeptide that is removed on maturation. Residues glutamine 52 to glutamine 69 are compositionally biased toward low complexity.

Expressed in mast cells in gill, skin and gut, and in lining blood vessels in the viscera. Also in intestine, spleen, anterior kidney, and blood cells.

It localises to the secreted. Functionally, antimicrobial peptide with broad-spectrum activity against Gram-positive and Gram-negative bacteria as well as against a variety of fungi. Rapidly inactivates channel catfish herpesvirus (ED(50)=4 uM) and frog virus 3 (ED(50)=13 uM) over a wide temperature range. Seems to disrupt the membranes by adopting an alpha helical conformation and forming toroidal pores. Has hemolytic activity. The protein is Moronecidin of Morone saxatilis (Striped bass).